Reading from the N-terminus, the 616-residue chain is Dihydroxy-acid dehydratase (616 aa).

A Mg(2+)-binding site is contributed by D81. C122 contributes to the [2Fe-2S] cluster binding site. Mg(2+)-binding residues include D123 and K124. K124 bears the N6-carboxylysine mark. C195 serves as a coordination point for [2Fe-2S] cluster. E491 is a Mg(2+) binding site. S517 acts as the Proton acceptor in catalysis.

Belongs to the IlvD/Edd family. Homodimer. [2Fe-2S] cluster is required as a cofactor. Requires Mg(2+) as cofactor.

The catalysed reaction is (2R)-2,3-dihydroxy-3-methylbutanoate = 3-methyl-2-oxobutanoate + H2O. It carries out the reaction (2R,3R)-2,3-dihydroxy-3-methylpentanoate = (S)-3-methyl-2-oxopentanoate + H2O. It functions in the pathway amino-acid biosynthesis; L-isoleucine biosynthesis; L-isoleucine from 2-oxobutanoate: step 3/4. The protein operates within amino-acid biosynthesis; L-valine biosynthesis; L-valine from pyruvate: step 3/4. Functions in the biosynthesis of branched-chain amino acids. Catalyzes the dehydration of (2R,3R)-2,3-dihydroxy-3-methylpentanoate (2,3-dihydroxy-3-methylvalerate) into 2-oxo-3-methylpentanoate (2-oxo-3-methylvalerate) and of (2R)-2,3-dihydroxy-3-methylbutanoate (2,3-dihydroxyisovalerate) into 2-oxo-3-methylbutanoate (2-oxoisovalerate), the penultimate precursor to L-isoleucine and L-valine, respectively. This chain is Dihydroxy-acid dehydratase, found in Yersinia enterocolitica serotype O:8 / biotype 1B (strain NCTC 13174 / 8081).